The primary structure comprises 435 residues: Methylenetetrahydrofolate--tRNA-(uracil-5-)-methyltransferase TrmFO (435 aa).

G7–G12 lines the FAD pocket.

It belongs to the MnmG family. TrmFO subfamily. FAD is required as a cofactor.

It is found in the cytoplasm. The enzyme catalyses uridine(54) in tRNA + (6R)-5,10-methylene-5,6,7,8-tetrahydrofolate + NADH + H(+) = 5-methyluridine(54) in tRNA + (6S)-5,6,7,8-tetrahydrofolate + NAD(+). It carries out the reaction uridine(54) in tRNA + (6R)-5,10-methylene-5,6,7,8-tetrahydrofolate + NADPH + H(+) = 5-methyluridine(54) in tRNA + (6S)-5,6,7,8-tetrahydrofolate + NADP(+). Its function is as follows. Catalyzes the folate-dependent formation of 5-methyl-uridine at position 54 (M-5-U54) in all tRNAs. The polypeptide is Methylenetetrahydrofolate--tRNA-(uracil-5-)-methyltransferase TrmFO (Thermotoga petrophila (strain ATCC BAA-488 / DSM 13995 / JCM 10881 / RKU-1)).